Here is an 872-residue protein sequence, read N- to C-terminus: Alanine--tRNA ligase (872 aa).

Positions 567, 571, 669, and 673 each coordinate Zn(2+).

It belongs to the class-II aminoacyl-tRNA synthetase family. It depends on Zn(2+) as a cofactor.

Its subcellular location is the cytoplasm. It catalyses the reaction tRNA(Ala) + L-alanine + ATP = L-alanyl-tRNA(Ala) + AMP + diphosphate. Its function is as follows. Catalyzes the attachment of alanine to tRNA(Ala) in a two-step reaction: alanine is first activated by ATP to form Ala-AMP and then transferred to the acceptor end of tRNA(Ala). Also edits incorrectly charged Ser-tRNA(Ala) and Gly-tRNA(Ala) via its editing domain. This is Alanine--tRNA ligase from Streptococcus pneumoniae serotype 4 (strain ATCC BAA-334 / TIGR4).